A 340-amino-acid chain; its full sequence is Protein B17 (340 aa).

This sequence belongs to the orthopoxvirus B17 protein family.

The chain is Protein B17 from Vaccinia virus (strain Copenhagen) (VACV).